The chain runs to 124 residues: Small ribosomal subunit protein uS13 (124 aa).

Positions 95–124 (GLPVRGQRTKTNARTRKGPKRTIAGKKKAR) are disordered.

Belongs to the universal ribosomal protein uS13 family. As to quaternary structure, part of the 30S ribosomal subunit. Forms a loose heterodimer with protein S19. Forms two bridges to the 50S subunit in the 70S ribosome.

Its function is as follows. Located at the top of the head of the 30S subunit, it contacts several helices of the 16S rRNA. In the 70S ribosome it contacts the 23S rRNA (bridge B1a) and protein L5 of the 50S subunit (bridge B1b), connecting the 2 subunits; these bridges are implicated in subunit movement. Contacts the tRNAs in the A and P-sites. This is Small ribosomal subunit protein uS13 from Mycobacteroides abscessus (strain ATCC 19977 / DSM 44196 / CCUG 20993 / CIP 104536 / JCM 13569 / NCTC 13031 / TMC 1543 / L948) (Mycobacterium abscessus).